We begin with the raw amino-acid sequence, 232 residues long: UPF0758 protein Clos_1766 (232 aa).

An MPN domain is found at 110-232 (KIKGPDDVSN…YFSMKEHKLI (123 aa)). Zn(2+) contacts are provided by His181, His183, and Asp194. Positions 181–194 (HNHPSGDPNPSGED) match the JAMM motif motif.

The protein belongs to the UPF0758 family.

In Alkaliphilus oremlandii (strain OhILAs) (Clostridium oremlandii (strain OhILAs)), this protein is UPF0758 protein Clos_1766.